The following is an 823-amino-acid chain: Pentatricopeptide repeat-containing protein At4g33990 (823 aa).

PPR repeat units lie at residues 85 to 115 (NVCISAKLVNLYCYLGNVALARHTFDHIQNR), 116 to 151 (DVYAWNLMISGYGRAGNSSEVIRCFSLFMLSSGLTP), 152 to 183 (DYRTFPSVLKACRTVIDGNKIHCLALKFGFMW), 184 to 214 (DVYVAASLIHLYSRYKAVGNARILFDEMPVR), 215 to 249 (DMGSWNAMISGYCQSGNAKEALTLSNGLRAMDSVT), 252 to 280 (SLLSACTEAGDFNRGVTIHSYSIKHGLES), 281 to 311 (ELFVSNKLIDLYAEFGRLRDCQKVFDRMYVR), 312 to 346 (DLISWNSIIKAYELNEQPLRAISLFQEMRLSRIQP), 347 to 381 (DCLTLISLASILSQLGDIRACRSVQGFTLRKGWFL), 383 to 413 (DITIGNAVVVMYAKLGLVDSARAVFNWLPNT), 414 to 448 (DVISWNTIISGYAQNGFASEAIEMYNIMEEEGEIA), 450 to 484 (NQGTWVSVLPACSQAGALRQGMKLHGRLLKNGLYL), 485 to 515 (DVFVVTSLADMYGKCGRLEDALSLFYQIPRV), 516 to 550 (NSVPWNTLIACHGFHGHGEKAVMLFKEMLDEGVKP), 551 to 581 (DHITFVTLLSACSHSGLVDEGQWCFEMMQTD), and 587 to 617 (SLKHYGCMVDMYGRAGQLETALKFIKSMSLQ). The interval 622-697 (IWGALLSACR…TPGWSSMEVD (76 aa)) is type E motif. Residues 698 to 728 (NKVEVFYTGNQTHPMYEEMYRELTALQAKLK) are type E(+) motif. Residues 729–823 (MIGYVPDHRF…NGVCSCGDYW (95 aa)) form a type DYW motif region.

This sequence belongs to the PPR family. PCMP-H subfamily.

This chain is Pentatricopeptide repeat-containing protein At4g33990 (EMB2758), found in Arabidopsis thaliana (Mouse-ear cress).